Consider the following 253-residue polypeptide: Zinc finger protein JAGGED (253 aa).

A disordered region spans residues 1-46 (MRHEENYLDLNNLPDDFSKDGNKQALEEGSSSGQRKKKGSKEGKDE). Basic and acidic residues predominate over residues 16 to 26 (DFSKDGNKQAL). The C2H2-type zinc-finger motif lies at 51–73 (YECRFCSLKFCKSQALGGHMNRH).

In terms of assembly, interacts with GATA18/HAN. In terms of tissue distribution, expressed in the emerging leaf, sepal, petal, stamen and carpel primordia. Not expressed in the apical shoot meristem (SAM).

It localises to the nucleus. In terms of biological role, controls the morphogenesis of lateral organs. Functions in lateral organ shape and is sufficient to induce proliferation and growth of lateral organ tissue. Is necessary and sufficient for bract formation, but its expression is excluded from the cryptic bract, which could be a cause of bractless flowers in Arabidopsis. Participates with FIL and YAB3 in regulating valve margin development. Functions with JGL to define stamen and carpel shape. Functions with AS1 and AS2 in the sepal and petal primordia to repress boundary-specifying genes for normal development of the organs. This chain is Zinc finger protein JAGGED (JAG), found in Arabidopsis thaliana (Mouse-ear cress).